The primary structure comprises 2494 residues: MEKVHVDLDADSPFVKSLQRCFPHFEIEATQVTDNDHANARAFSHLATKLIEGEVDTDQVILDIGSAPVRHTHSKHKYHCICPMKSAEDPDRLYRYADKLRKSDVTDKCIASKAADLLTVMSTPDAETPSLCMHTDSTCRYHGSVAVYQDVYAVHAPTSIYYQALKGVRTIYWIGFDTTPFMYKNMAGAYPTYNTNWADESVLEARNIGLGSSDLHEKSFGKVSIMRKKKLQPTNKVIFSVGSTIYTEERILLRSWHLPNVFHLKGKTSFTGRCNTIVSCEGYVVKKITLSPGIYGKVDNLASTMHREGFLSCKVTDTLRGERVSFPVCTYVPATLCDQMTGILATDVSVDDAQKLLVGLNQRIVVNGRTQRNTNTMQNYLLPVVAQAFSRWAREHRADLEDEKGLGVRERSLVMGCCWAFKTHKITSIYKRPGTQTIKKVPAVFNSFVIPQPTSYGLDIGLRRRIKMLFDAKKAPAPIITEADVAHLKGLQDEAEAVAEAEAVRAALPPLLPEVDKETVEADIDLIMQEAGAGSVETPRRHIKVTTYPGEEMIGSYAVLSPQAVLNSEKLACIHPLAEQVLVMTHKGRAGRYKVEPYHGRVIVPSGTAIPILDFQALSESATIVFNEREFVNRYLHHIAVNGGALNTDEEYYKVVKSTETDSEYVFDIDAKKCVKKGDAGPMCLVGELVDPPFHEFAYESLKTRPAAPHKVPTIGVYGVPGSGKSGIIKSAVTKRDLVVSAKKENCMEIIKDVKRMRGMDIAARTVDSVLLNGVKHSVDTLYIDEAFACHAGTLLALIAIVKPKKVVLCGDPKQCGFFNMMCLKVHFNHEICTEVYHKSISRRCTKTVTSIVSTLFYDKRMRTVNPCNDKIIIDTTSTTKPLKDDIILTCFRGWVKQLQIDYKNHEIMTAAASQGLTRKGVYAVRYKVNENPLYAQTSEHVNVLLTRTEKRIVWKTLAGDPWIKTLTASYPGNFTATLEEWQAEHDAIMAKILETPASSDVFQNKVNVCWAKALEPVLATANITLTRSQWETIPAFKDDKAYSPEMALNFFCTRFFGVDIDSGLFSAPTVPLTYTNEHWDNSPGPNMYGLCMRTAKELARRYPCILKAVDTGRVADVRTDTIKDYNPLINVVPLNRRLPHSLVVTHRYTGNGDYSQLVTKMTGKTVLVVGTPMNIPGKRVETLGPSPQCTYKAELDLGIPAALGKYDIIFINVRTPYRHHHYQQCEDHAIHHSMLTRKAVDHLNKGGTCIALGYGTADRATENIISAVARSFRFSRVCQPKCAWENTEVAFVFFGKDNGNHLQDQDRLSVVLNNIYQGSTQHEAGRAPAYRVVRGDITKSNDEVIVNAANNKGQPGSGVCGALYRKWPGAFDKQPVATGKAHLVKHSPNVIHAVGPNFSRLSENEGDQKLSEVYMDIARIINNERFTKVSIPLLSTGIYAGGKDRVMQSLNHLFTAMDTTDADITIYCLDKQWESRIKEAITRKESVEELTEDDRPVDIELVRVHPLSSLAGRPGYSTTEGKVYSYLEGTRFHQTAKDIAEIYAMWPNKQEANEQICLYVLGESMNSIRSKCPVEESEASSPPHTIPCLCNYAMTAERVYRLRMAKNEQFAVCSSFQLPKYRITGVQKIQCSKPVIFSGTVPPAIHPRKFASVTVEDTPVVQPERLVPRRPAPPVPVPARIPSPPCTSTNGSTTSIQSLGEDQSASASSGAEISVDQVSLWSIPSATGFDVRTSSSLSLEQPTFPTMVVEAEIHASQGSLWSIPSITGSETRAPSPPSQDSRPSTPSASGSHTSVDLITFDSVAEILEDFSRSPFQFLSEIKPIPAPRTRVNNMSRSADTIKPIPKPRKCQVKYTQPPGVARVISAAEFDEFVRRHSNXRYEAGAYIFSSETGQGHLQQKSTRQCKLQYPILERSVHEKFYAPRLDLEREKLLQKKLQLCASEGNRSRYQSRKVENMKAITVERLLQGIGSYLSAEPQPVECYKVTYPAPMYSSTASNSFSSAEVAVKVCNLVLQENFPTVASYNITDEYDAYLDMVDGASCCLDTATFCPAKLRSFPKKHSYLRPEIRSAVPSPIQNTLQNVLAAATKRNCNVTQMRELPVLDSAAFNVECFKKYACNDEYWDFYKTNPIRLTAENVTQYVTKLKGPKAAALFAKTHNLQPLHEIPMDRFVMDLKRDVKVTPGTKHTEERPKVQVIQAADPLATAYLCGIHRELVRRLNAVLLPNIHTLFDMSAEDFDAIIAEHFQFGDAVLETDIASFDKSEDDAIAMSALMILEDLGVDQALLNLIEAAFGNITSVHLPTGTRFKFGAMMKSGMFLTLFINTVVNIMIASRVLRERLTTSPCAAFIGDDNIVKGVTSDALMAERCATWLNMEVKIIDAVVGVKAPYFCGGFIVVDQITGTACRVADPLKRLFKLGKPLPLDDDQDVDRRRALHDEAARWNRIGITEELVKAVESRYEVNYVSLIITALTTLASSVSNFKHIRGHPITLYG.

The region spanning Glu28 to His257 is the Alphavirus-like MT domain. Residues Gly242 to Val261 form a nsP1 membrane-binding region. A lipid anchor (S-palmitoyl cysteine; by host) is attached at Cys417. Residues Cys674 to Lys839 form the (+)RNA virus helicase ATP-binding domain. A ribonucleoside 5'-triphosphate is bound at residue Gly719–Ser726. The region spanning Ser840–Ala988 is the (+)RNA virus helicase C-terminal domain. The Peptidase C9 domain occupies Asp1001 to Ser1320. A nucleolus localization signal region spans residues Val1002 to Thr1021. Catalysis depends on Cys1010, which acts as the For cysteine protease nsP2 activity. The short motif at Thr1054–Ser1063 is the Nuclear export signal element. The For cysteine protease nsP2 activity role is filled by His1079. Positions Pro1177–Val1181 match the Nuclear localization signal motif. The 159-residue stretch at Ala1328–Glu1486 folds into the Macro domain. 6 residues coordinate ADP-D-ribose: Asp1337, Asn1351, Gly1359, Gly1438, Ile1439, and Tyr1440. 4 residues coordinate Zn(2+): Cys1589, Cys1591, Cys1614, and Cys1632. 2 disordered regions span residues Leu1667–Gly1711 and Ile1764–Thr1794. Over residues Arg1671–Pro1686 the composition is skewed to pro residues. Residues Cys1687 to Gly1711 are compositionally biased toward polar residues. Residues Leu1798 to Asp1810 form a binding to host G3BP family members region. A binding to host FXR family members region spans residues Pro1858–Val1874. The RdRp catalytic domain occupies Ala2252–Glu2367.

Interacts with non-structural protein 3. Interacts with RNA-directed RNA polymerase nsP4. Interacts with protease nsP2. interacts with itself. In terms of assembly, interacts with mRNA-capping enzyme nsP1. Interacts with host DDX1. Interacts with host DDX3. Interacts (via C-terminus) with host FXR1; this interaction inhibits the formation of host stress granules on viral mRNAs and the nsp3-FXR1 complexes bind viral RNAs and probably orchestrate the assembly of viral replication complexes. Interacts (via C-terminus) with host FXR2; this interaction inhibits the formation of host stress granules on viral mRNAs and the nsp3-FXR2 complexes bind viral RNAs and probably orchestrate the assembly of viral replication complexes. Interacts (via C-terminus) with host FMR1; this interaction inhibits the formation of host stress granules on viral mRNAs and the nsp3-FMR1 complexes bind viral RNAs and probably orchestrate the assembly of viral replication complexes. Interacts (via C-terminus) with host G3BP1; this interaction inhibits the formation of host stress granules on viral mRNAs and the nsp3-G3BP1 complexes bind viral RNAs and probably orchestrate the assembly of viral replication complexes. Interacts (via C-terminus) with host G3BP2; this interaction inhibits the formation of host stress granules on viral mRNAs and the nsp3-G3BP2 complexes bind viral RNAs and probably orchestrate the assembly of viral replication complexes. As to quaternary structure, interacts with mRNA-capping enzyme nsP1. Interacts with protease nsP2. interacts with itself. Interacts with RNA-directed RNA polymerase nsP4. Interacts with mRNA-capping enzyme nsP1. Interacts with KPNA1/karyopherin-alpha1; this interaction probably allows the active transport of protease nsP2 into the host nucleus. The cofactor is Mg(2+). Requires Mn(2+) as cofactor. Specific enzymatic cleavages in vivo yield mature proteins. The processing of the polyprotein is temporally regulated. In early stages (1.7 hpi), P1234 is first cleaved in trans through its nsP2 protease activity, releasing P123' and nsP4, which associate to form the early replication complex. At the same time, P1234 is also cut at the nsP1/nsP2 site early in infection but with lower efficiency. After replication of the viral minus-strand RNAs (4 hpi), the polyproteins are cut at the nsP1/nsP2 and nsP2/nsP3 sites very efficiently, preventing accumulation of P123' and P1234 and allowing the formation of the late replication complex. NsP3'/nsP4 site is not cleaved anymore and P34 is produced rather than nsP4. Post-translationally, specific enzymatic cleavages in vivo yield mature proteins. The processing of the polyprotein is temporally regulated. In early stages (1.7 hpi), P123 is cleaved at the nsP1/nsP2 site with low efficiency. After replication of the viral minus-strand RNAs (4 hpi), the polyproteins are cut at the nsP1/nsP2 and nsP2/nsP3 sites very efficiently, preventing accumulation of P123 and allowing the formation of the late replication complex. In terms of processing, specific enzymatic cleavages in vivo yield mature proteins. The processing of the polyprotein is temporally regulated. In early stages (1.7 hpi), P123' is cleaved at the nsP1/nsP2 site with low efficiency. After replication of the viral minus-strand RNAs (4 hpi), the polyproteins are cut at the nsP1/nsP2 and nsP2/nsP3 sites very efficiently, preventing accumulation of P123' and allowing the formation of the late replication complex. Palmitoylated by host palmitoyltransferases ZDHHC2 and ZDHHC19. Post-translationally, phosphorylated by host on serines and threonines. In terms of processing, ubiquitinated; targets the protein for rapid degradation via the ubiquitin system. Nsp4 is present in extremely low quantities due to low frequency of translation through the amber stop-codon and the degradation by the ubiquitin pathway.

It is found in the host cytoplasmic vesicle membrane. The protein resides in the host cell membrane. It localises to the host cell projection. The protein localises to the host filopodium. Its subcellular location is the host nucleus. It is found in the host cytoplasm. It catalyses the reaction GTP + S-adenosyl-L-methionine = N(7)-methyl-GTP + S-adenosyl-L-homocysteine. It carries out the reaction N(7)-methyl-GTP + L-histidyl-[protein] = N(tele)-(N(7)-methylguanosine 5'-phospho)-L-histidyl-[protein] + diphosphate. The catalysed reaction is N(tele)-(N(7)-methylguanosine 5'-phospho)-L-histidyl-[protein] + a 5'-end diphospho-(purine-ribonucleoside) in mRNA + H(+) = a 5'-end (N(7)-methyl 5'-triphosphoguanosine)-(purine-ribonucleoside) in mRNA + L-histidyl-[protein]. The enzyme catalyses a 5'-end triphospho-ribonucleoside in mRNA + H2O = a 5'-end diphospho-ribonucleoside in mRNA + phosphate + H(+). It catalyses the reaction a ribonucleoside 5'-triphosphate + H2O = a ribonucleoside 5'-diphosphate + phosphate + H(+). It carries out the reaction ATP + H2O = ADP + phosphate + H(+). The catalysed reaction is RNA(n) + a ribonucleoside 5'-triphosphate = RNA(n+1) + diphosphate. The enzyme catalyses 4-O-(ADP-D-ribosyl)-L-aspartyl-[protein] + H2O = L-aspartyl-[protein] + ADP-D-ribose + H(+). It catalyses the reaction 5-O-(ADP-D-ribosyl)-L-glutamyl-[protein] + H2O = L-glutamyl-[protein] + ADP-D-ribose + H(+). It carries out the reaction RNA(n) + ATP = RNA(n)-3'-adenine ribonucleotide + diphosphate. The catalysed reaction is ADP-alpha-D-ribose 1''-phosphate + H2O = ADP-D-ribose + phosphate. Inhibited by sinefungin. Its function is as follows. Inactive precursor of the viral replicase, which is activated by cleavages carried out by the viral protease nsP2. The early replication complex formed by the polyprotein P123 and nsP4 synthesizes the minus-strand RNAs (antigenome). Polyprotein P123 is a short-lived polyprotein that accumulates during early stage of infection. As soon P123 is cleaved into mature proteins, the plus-strand RNAs synthesis begins. Functionally, the early replication complex formed by the polyprotein P123' and nsP4 synthesizes minus-strand RNAs (antigenome). Polyprotein P123' is a short-lived polyprotein that accumulates during early stage of infection. As soon P123' is cleaved into mature proteins, the plus-strand RNAs synthesis begins. In terms of biological role, cytoplasmic capping enzyme that catalyzes two virus-specific reactions: methyltransferase and nsP1 guanylyltransferase. mRNA-capping is necessary since all viral RNAs are synthesized in the cytoplasm, and host capping enzymes are restricted to the nucleus. The enzymatic reaction involves a covalent link between 7-methyl-GMP and nsP1, whereas eukaryotic capping enzymes form a covalent complex only with GMP. NsP1 capping consists in the following reactions: GTP is first methylated into 7-methyl-GMP and then is covalently linked to nsP1 to form the m7GMp-nsP1 complex from which 7-methyl-GMP complex is transferred to the mRNA to create the cap structure. NsP1 is also needed for the initiation of the minus-strand RNAs synthesis. Probably serves as a membrane anchor for the replication complex composed of nsP1-nsP4. Nsp1 is needed for the initiation of the minus-strand RNAs synthesis. Palmitoylated nsP1 is remodeling host cell cytoskeleton, and induces filopodium-like structure formation at the surface of the host cell. Its function is as follows. Multifunctional protein whose N-terminus is part of the RNA polymerase complex and displays NTPase, RNA triphosphatase and helicase activities. NTPase and RNA triphosphatase are involved in viral RNA capping and helicase keeps a check on the dsRNA replication intermediates. The C-terminus harbors a protease that specifically cleaves the polyproteins and releases the mature proteins. Required for the shutoff of minus-strand RNAs synthesis. Inhibits host translation to ensure maximal viral gene expression and evade host immune response. Seems to be essential for minus-strand RNAs and subgenomic 26S mRNAs synthesis. Displays mono-ADP-ribosylhydrolase activity. ADP-ribosylation is a post-translational modification that controls various processes of the host cell and the virus probably needs to revert it for optimal viral replication. Binds proteins of FXR and G3BP families and sequesters them into the viral RNA replication complexes thereby inhibiting the formation of host stress granules on viral mRNAs. The nsp3-FXR and nsp3-G3BP complexes bind viral RNAs and probably orchestrate the assembly of viral replication complexes, thanks to the ability of G3BP and FXR family members to self-assemble and bind DNA. Functionally, seems to be essential for minus-strand RNAs and subgenomic 26S mRNAs synthesis. Displays mono-ADP-ribosylhydrolase activity. ADP-ribosylation is a post-translational modification that controls various processes of the host cell and the virus probably needs to revert it for optimal viral replication. Binds proteins of FXR family and sequesters them into the viral RNA replication complexes thereby inhibiting the formation of host stress granules on viral mRNAs. The nsp3'-FXR complexes bind viral RNAs and probably orchestrate the assembly of viral replication complexes, thanks to the ability of FXR family members to self-assemble and bind DNA. In terms of biological role, RNA dependent RNA polymerase. Replicates genomic and antigenomic RNA by recognizing replications specific signals. The early replication complex formed by the polyprotein P123 and nsP4 synthesizes minus-strand RNAs. The late replication complex composed of fully processed nsP1-nsP4 is responsible for the production of genomic and subgenomic plus-strand RNAs. This is Polyprotein P1234 from Aedes (Human).